We begin with the raw amino-acid sequence, 377 residues long: Guanine nucleotide-binding protein subunit beta (377 aa).

WD repeat units follow at residues 63–93, 105–135, 154–185, 202–233, 246–276, 293–323, and 339–369; these read GHTG…IVWN, LPCA…SIFN, GHKG…VLWD, GHTA…RLWD, GHES…RLFD, GDIP…YVWD, and SHEG…KIWA.

This sequence belongs to the WD repeat G protein beta family. In terms of assembly, g proteins are composed of 3 units, alpha, beta and gamma.

In terms of biological role, guanine nucleotide-binding proteins (G proteins) are involved as a modulator or transducer in various transmembrane signaling systems. The beta and gamma chains are required for the GTPase activity, for replacement of GDP by GTP, and for G protein-effector interaction. This Solanum tuberosum (Potato) protein is Guanine nucleotide-binding protein subunit beta (GB1).